The following is a 336-amino-acid chain: UDP-N-acetylenolpyruvoylglucosamine reductase (336 aa).

In terms of domain architecture, FAD-binding PCMH-type spans 17–188 (GFDVRARYAS…TAVTLRLSRD (172 aa)). Arg-164 is an active-site residue. Ser-236 serves as the catalytic Proton donor. Glu-332 is a catalytic residue.

Belongs to the MurB family. Requires FAD as cofactor.

The protein localises to the cytoplasm. It carries out the reaction UDP-N-acetyl-alpha-D-muramate + NADP(+) = UDP-N-acetyl-3-O-(1-carboxyvinyl)-alpha-D-glucosamine + NADPH + H(+). The protein operates within cell wall biogenesis; peptidoglycan biosynthesis. In terms of biological role, cell wall formation. In Cupriavidus pinatubonensis (strain JMP 134 / LMG 1197) (Cupriavidus necator (strain JMP 134)), this protein is UDP-N-acetylenolpyruvoylglucosamine reductase.